Consider the following 702-residue polypeptide: Putative endo-beta-N-acetylglucosaminidase (702 aa).

The first 23 residues, 1–23, serve as a signal peptide directing secretion; it reads MKKVRFIFLALLFFLASPEGAMA. Cell wall-binding repeat units follow at residues 42–63, 65–84, 86–105, 124–145, 147–166, 185–206, 208–227, 229–248, 250–271, 273–292, 294–315, 317–336, 338–359, 361–380, and 382–403; these read ANEW…DANY, ENEW…GGYM, KSEW…DGKM, IEDW…DGQH, EKEW…GGYL, QQGW…NGNY, DKEW…GGYM, ANEW…DGKI, EKEW…GGYM, and ANEW…DGKM.

This sequence belongs to the glycosyl hydrolase 73 family.

The protein localises to the secreted. It catalyses the reaction an N(4)-(oligosaccharide-(1-&gt;3)-[oligosaccharide-(1-&gt;6)]-beta-D-Man-(1-&gt;4)-beta-D-GlcNAc-(1-&gt;4)-alpha-D-GlcNAc)-L-asparaginyl-[protein] + H2O = an oligosaccharide-(1-&gt;3)-[oligosaccharide-(1-&gt;6)]-beta-D-Man-(1-&gt;4)-D-GlcNAc + N(4)-(N-acetyl-beta-D-glucosaminyl)-L-asparaginyl-[protein]. In terms of biological role, plays an important role in cell wall degradation and cell separation. This chain is Putative endo-beta-N-acetylglucosaminidase (lytB), found in Streptococcus pneumoniae (strain ATCC BAA-255 / R6).